The following is a 538-amino-acid chain: Putative cysteine ligase BshC (538 aa).

The stretch at 460–484 forms a coiled coil; it reads KINEQIELLERMLKRNVEKKHEVEL.

This sequence belongs to the BshC family.

Functionally, involved in bacillithiol (BSH) biosynthesis. May catalyze the last step of the pathway, the addition of cysteine to glucosamine malate (GlcN-Mal) to generate BSH. This chain is Putative cysteine ligase BshC, found in Bacillus cereus (strain AH187).